A 297-amino-acid polypeptide reads, in one-letter code: Adrenocorticotropic hormone receptor (297 aa).

The Extracellular segment spans residues 1–23 (MKHIINSYENINNTARNNSDCPR). N-linked (GlcNAc...) asparagine glycosylation is found at Asn12 and Asn17. Disulfide bonds link Cys21-Cys253 and Cys245-Cys251. A helical transmembrane segment spans residues 24 to 49 (VVLPEEIFFTISIVGVLENLIVLLAV). Topologically, residues 50–58 (FKNKNLQAP) are cytoplasmic. A helical transmembrane segment spans residues 59-79 (MYFFICSLAISDMLGSLYKIL). Residues 80 to 104 (ENILIILRNMGYLKPRGSFETTADD) lie on the Extracellular side of the membrane. Residues 105-126 (IIDSLFVLSLLGSIFSLSVIAA) form a helical membrane-spanning segment. The Cytoplasmic portion of the chain corresponds to 127–147 (DRYITIFHALRYHSIVTMRRT). A helical membrane pass occupies residues 148-168 (VVVLTVIWTFCTGTGITMVIF). At 169–180 (SHHVPTVITFTS) the chain is on the extracellular side. A helical transmembrane segment spans residues 181-199 (LFPLMLVFILCLYVHMFLL). Topologically, residues 200–217 (ARSHTRKISTLPRANMKG) are cytoplasmic. Residues 218-244 (AITLTILLGVFIFCWAPFVLHVLLMTF) form a helical membrane-spanning segment. Over 245–256 (CPSNPYCACYMS) the chain is Extracellular. Residues 257-278 (LFQVNGMLIMCNAVIDPFIYAF) traverse the membrane as a helical segment. The Cytoplasmic segment spans residues 279-297 (RSPELRDAFKKMIFCSRYW). Residue Cys293 is the site of S-palmitoyl cysteine attachment.

The protein belongs to the G-protein coupled receptor 1 family. In terms of assembly, homodimer. Interacts with corticotropin (ACTH). Interacts with MRAP; this interaction targets MC2R to the plasma membrane. Interacts with MRAP2; competing with MRAP for binding to MC2R and impairing the binding of corticotropin (ACTH). In terms of processing, ubiquitinated by MGRN1 that may be involved in post-endocytic trafficking and/or degradation of internalized receptor. In terms of tissue distribution, melanocytes and corticoadrenal tissue.

It localises to the cell membrane. Its function is as follows. Hormone receptor primarily expressed in adrenal cortex that plays a key role in regulating adrenocortical function. Upon corticotropin (ACTH) binding, facilitates the release of adrenal glucocorticoids, including cortisol and corticosterone. In addition, MC2R is required for fetal and neonatal adrenal gland development. Mechanistically, activates adenylate cyclase (cAMP), the MAPK cascade as well as the cAMP-dependent protein kinase A pathway leading to steroidogenic factor 1/NR5A1-mediated transcriptional activation. In Homo sapiens (Human), this protein is Adrenocorticotropic hormone receptor (MC2R).